We begin with the raw amino-acid sequence, 416 residues long: Tumor necrosis factor receptor superfamily member 19 (416 aa).

Residues 1-29 form the signal peptide; it reads MALKVLPLHRTVLFAAILFLLHLACKVSC. Residues 30–170 lie on the Extracellular side of the membrane; that stretch reads ETGDCRQQEF…TVSSPRDTAL (141 aa). 2 TNFR-Cys repeats span residues 33 to 72 and 74 to 114; these read DCRQQEFKDRSGNCVLCKQCGPGMELSKECGFGYGEDAQC and PCRP…DAVC. Cystine bridges form between Cys-34/Cys-46, Cys-49/Cys-62, Cys-52/Cys-72, Cys-75/Cys-89, Cys-92/Cys-106, Cys-95/Cys-114, Cys-117/Cys-135, and Cys-138/Cys-149. Residue Asn-105 is glycosylated (N-linked (GlcNAc...) asparagine). The TNFR-Cys 3; truncated repeat unit spans residues 116–149; that stretch reads DCLPGFYRKTKLVGFQDMECVPCGDPPPPYEPHC. Residues 171–191 traverse the membrane as a helical segment; it reads AAVICSALATVLLALLILCVI. Over 192-416 the chain is Cytoplasmic; sequence YCKRQFMEKK…LAMPTAFQDA (225 aa). The segment at 321–416 is disordered; that stretch reads LCDSYPELTG…LAMPTAFQDA (96 aa). 3 stretches are compositionally biased toward polar residues: residues 331–351, 360–370, and 381–396; these read EDTNSLNPENESAASLDSSGG, LESSGNVSEST, and VWEQTLAQDAQRTPSQ.

Associates with TRAF1, TRAF2, TRAF3 and TRAF5. Interacts with LINGO1. In terms of tissue distribution, highly expressed in adult brain, and in embryos from day 11-17, but not earlier. Detected in embryonic brain and epithelium, and at lower levels in adult heart, lung and liver. In neonatal mice, mainly in hair follicles and neuron-like cells in the cerebellum, but not in the skin epidermis. Isoform 3 was found in embryonic day 17.5 skin but not in brain and liver.

It localises to the cell membrane. The protein localises to the secreted. Functionally, can mediate activation of c-Jun and NF-kappa-B. May promote caspase-independent cell death. Isoform 2 and isoform 3 may act as decoy receptors. This Mus musculus (Mouse) protein is Tumor necrosis factor receptor superfamily member 19 (Tnfrsf19).